A 338-amino-acid polypeptide reads, in one-letter code: Mitochondrial glutathione transporter SLC25A40 (338 aa).

Solcar repeat units follow at residues 13 to 131, 139 to 223, and 233 to 327; these read VTPL…LTAL, NESR…LKKW, and PTFM…GKSF. 6 helical membrane-spanning segments follow: residues 19–39, 103–123, 145–165, 199–220, 239–259, and 298–318; these read MFAS…FDVV, LWSG…IYFT, IVAG…LELI, WAPT…YEVL, FTSG…FDVV, and GLFT…AVMI.

The protein belongs to the mitochondrial carrier (TC 2.A.29) family.

Its subcellular location is the mitochondrion inner membrane. The catalysed reaction is glutathione(in) = glutathione(out). Probable mitochondrial transporter required for glutathione import into mitochondria. Glutathione, which plays key roles in oxidative metabolism, is produced exclusively in the cytosol and is imported in many organelles. Mitochondrial glutathione is required for the activity and stability of proteins containing iron-sulfur clusters, as well as erythropoiesis. This is Mitochondrial glutathione transporter SLC25A40 from Bos taurus (Bovine).